Consider the following 338-residue polypeptide: Ferredoxin--NADP reductase (338 aa).

FAD is bound by residues Thr14, Asp33, Gln41, Tyr46, Val86, Phe120, Asp284, and Thr325.

This sequence belongs to the ferredoxin--NADP reductase type 2 family. Homodimer. Requires FAD as cofactor.

It carries out the reaction 2 reduced [2Fe-2S]-[ferredoxin] + NADP(+) + H(+) = 2 oxidized [2Fe-2S]-[ferredoxin] + NADPH. The chain is Ferredoxin--NADP reductase from Pelagibacter ubique (strain HTCC1062).